The primary structure comprises 222 residues: Sugar fermentation stimulation protein homolog (222 aa).

The protein belongs to the SfsA family.

The protein is Sugar fermentation stimulation protein homolog of Thermoplasma acidophilum (strain ATCC 25905 / DSM 1728 / JCM 9062 / NBRC 15155 / AMRC-C165).